A 338-amino-acid polypeptide reads, in one-letter code: Anthranilate phosphoribosyltransferase (338 aa).

Residues Gly-81, 84 to 85 (GD), Ser-89, 91 to 94 (NVST), 109 to 117 (KHGNRALSS), and Ala-121 each bind 5-phospho-alpha-D-ribose 1-diphosphate. Gly-81 contacts anthranilate. Ser-93 provides a ligand contact to Mg(2+). Asn-112 is an anthranilate binding site. An anthranilate-binding site is contributed by Arg-167. Mg(2+) contacts are provided by Asp-226 and Glu-227.

Belongs to the anthranilate phosphoribosyltransferase family. Homodimer. Requires Mg(2+) as cofactor.

The enzyme catalyses N-(5-phospho-beta-D-ribosyl)anthranilate + diphosphate = 5-phospho-alpha-D-ribose 1-diphosphate + anthranilate. The protein operates within amino-acid biosynthesis; L-tryptophan biosynthesis; L-tryptophan from chorismate: step 2/5. Catalyzes the transfer of the phosphoribosyl group of 5-phosphorylribose-1-pyrophosphate (PRPP) to anthranilate to yield N-(5'-phosphoribosyl)-anthranilate (PRA). This chain is Anthranilate phosphoribosyltransferase, found in Rhodopseudomonas palustris (strain ATCC BAA-98 / CGA009).